Here is a 257-residue protein sequence, read N- to C-terminus: 1-(5-phosphoribosyl)-5-[(5-phosphoribosylamino)methylideneamino] imidazole-4-carboxamide isomerase (257 aa).

Residue aspartate 8 is the Proton acceptor of the active site. Aspartate 129 serves as the catalytic Proton donor.

This sequence belongs to the HisA/HisF family.

It localises to the cytoplasm. The enzyme catalyses 1-(5-phospho-beta-D-ribosyl)-5-[(5-phospho-beta-D-ribosylamino)methylideneamino]imidazole-4-carboxamide = 5-[(5-phospho-1-deoxy-D-ribulos-1-ylimino)methylamino]-1-(5-phospho-beta-D-ribosyl)imidazole-4-carboxamide. Its pathway is amino-acid biosynthesis; L-histidine biosynthesis; L-histidine from 5-phospho-alpha-D-ribose 1-diphosphate: step 4/9. This chain is 1-(5-phosphoribosyl)-5-[(5-phosphoribosylamino)methylideneamino] imidazole-4-carboxamide isomerase, found in Thermosynechococcus vestitus (strain NIES-2133 / IAM M-273 / BP-1).